Reading from the N-terminus, the 176-residue chain is Sec-independent protein translocase protein TatB (176 aa).

A helical transmembrane segment spans residues 1-21 (MLDLGLSKMALIGVVALVVLG). A disordered region spans residues 155-176 (QSGAARVARHQPASLRRPTRFL).

The protein belongs to the TatB family. The Tat system comprises two distinct complexes: a TatABC complex, containing multiple copies of TatA, TatB and TatC subunits, and a separate TatA complex, containing only TatA subunits. Substrates initially bind to the TatABC complex, which probably triggers association of the separate TatA complex to form the active translocon.

Its subcellular location is the cell inner membrane. In terms of biological role, part of the twin-arginine translocation (Tat) system that transports large folded proteins containing a characteristic twin-arginine motif in their signal peptide across membranes. Together with TatC, TatB is part of a receptor directly interacting with Tat signal peptides. TatB may form an oligomeric binding site that transiently accommodates folded Tat precursor proteins before their translocation. The sequence is that of Sec-independent protein translocase protein TatB from Burkholderia ambifaria (strain ATCC BAA-244 / DSM 16087 / CCUG 44356 / LMG 19182 / AMMD) (Burkholderia cepacia (strain AMMD)).